The sequence spans 224 residues: E3 ubiquitin-protein ligase TRIM48 (224 aa).

The RING-type zinc-finger motif lies at 31–72; it reads CPICMNYFIDPVTIDCGHSFCRPCFYLNWQDIPILTQCFECI. The B box-type zinc-finger motif lies at 104-145; the sequence is SEEQMCGIHRETKKMFCEVDRSLLCLLCSSSQEHRYHRHCPA. Positions 109, 112, 131, and 137 each coordinate Zn(2+).

This sequence belongs to the TRIM/RBCC family. In terms of assembly, interacts with PRMT1; the interaction leads to ubiquitination of PRMT1 by TRIM48. Interacts with MAP3K5. Interacts with STRAP.

The protein resides in the cytoplasm. The protein localises to the cytosol. The catalysed reaction is S-ubiquitinyl-[E2 ubiquitin-conjugating enzyme]-L-cysteine + [acceptor protein]-L-lysine = [E2 ubiquitin-conjugating enzyme]-L-cysteine + N(6)-ubiquitinyl-[acceptor protein]-L-lysine.. In terms of biological role, E3 ubiquitin-protein ligase which promotes K48-linked polyubiquitination of protein methyltransferase PRMT1, leading to PRMT1 degradation. This suppresses methylation of the PRMT1 substrate MAP3K5/ASK1, promoting its activation and increasing MAP3K5-dependent cell death induced by oxidative stress. TRIM48-mediated ubiquitination of PRMT1 also suppresses methylation of FOXO1 by PRMT1, leading to inhibition of FOXO1 transcriptional activity. This is E3 ubiquitin-protein ligase TRIM48 from Homo sapiens (Human).